The primary structure comprises 182 residues: Large ribosomal subunit protein uL6 (182 aa).

It belongs to the universal ribosomal protein uL6 family. Part of the 50S ribosomal subunit.

In terms of biological role, this protein binds to the 23S rRNA, and is important in its secondary structure. It is located near the subunit interface in the base of the L7/L12 stalk, and near the tRNA binding site of the peptidyltransferase center. The sequence is that of Large ribosomal subunit protein uL6 from Methanococcus maripaludis (strain C6 / ATCC BAA-1332).